A 647-amino-acid chain; its full sequence is Exoribonuclease 2 (647 aa).

An RNB domain is found at 191-517 (REDLCALPFV…VNHRLLKALI (327 aa)). Residues 563–645 (PTPFNAEIID…DTRSLIARPF (83 aa)) enclose the S1 motif domain.

The protein belongs to the RNR ribonuclease family. RNase II subfamily.

It localises to the cytoplasm. The enzyme catalyses Exonucleolytic cleavage in the 3'- to 5'-direction to yield nucleoside 5'-phosphates.. Its function is as follows. Involved in mRNA degradation. Hydrolyzes single-stranded polyribonucleotides processively in the 3' to 5' direction. This is Exoribonuclease 2 from Edwardsiella piscicida.